A 246-amino-acid polypeptide reads, in one-letter code: Triosephosphate isomerase (246 aa).

9-11 (NWK) is a binding site for substrate. His91 functions as the Electrophile in the catalytic mechanism. The Proton acceptor role is filled by Glu161. Substrate is bound by residues Gly167, Ser206, and 227 to 228 (GG).

The protein belongs to the triosephosphate isomerase family. As to quaternary structure, homodimer.

Its subcellular location is the cytoplasm. It catalyses the reaction D-glyceraldehyde 3-phosphate = dihydroxyacetone phosphate. The protein operates within carbohydrate biosynthesis; gluconeogenesis. It functions in the pathway carbohydrate degradation; glycolysis; D-glyceraldehyde 3-phosphate from glycerone phosphate: step 1/1. Functionally, involved in the gluconeogenesis. Catalyzes stereospecifically the conversion of dihydroxyacetone phosphate (DHAP) to D-glyceraldehyde-3-phosphate (G3P). The polypeptide is Triosephosphate isomerase (Ruegeria sp. (strain TM1040) (Silicibacter sp.)).